The chain runs to 317 residues: Putative HTH-type transcriptional regulatory protein Mboo_0195 (317 aa).

Positions 132–185 (LRELRERRSMSLGDLGQVLGVSRRTISKYESGMGTTLEVAIRIEEYFNTGVVES) constitute an HTH cro/C1-type domain. Residues 143-162 (LGDLGQVLGVSRRTISKYES) constitute a DNA-binding region (H-T-H motif).

This Methanoregula boonei (strain DSM 21154 / JCM 14090 / 6A8) protein is Putative HTH-type transcriptional regulatory protein Mboo_0195.